The chain runs to 1098 residues: MICGLILSRLVGPGCEKGGRAFFPCDPYASPFPSIKGLQLHNAQLFVQNFQNPNTPYSRLLLNWQTGTGKSIAAIAIARQFMNHYMNFIENAPWIFVVGFTRTIIQTEMLRRPELGFVSYKEVAELHRLLHIAKQSGSTTSVESRHLNGFISTLKRRLTDRNRGGFFQFYGYKEFASKLFNITSKGEEKNFDVLSLFHRSDEAEDTLNENDISQFVQKISEAETNGLIRVNQKIMEQLRGGLLIADEIHNVYNIQERNNYGIALQYVLDAFPPHQAPRAVFMSATPVTGSVMEYVDLLNLLVPRHELPNGQPLQRQQLFDNSGHSVKWKKDALALVERLSIGRVSFLLDTNTNFYPERIFAGKMLSYRDEKLPYLHFIECPMSNYQLETLKQLGPDPKISSNAYSIYDMVFPNPKFSKQTEPKAYGLFNSTETPAALSMASTDWLLENGVQIIEPSRRTPFNVSGSFLSLQPPTHISGLAFYSGKYTQMMKDILSIIREGRGKILIYHNRVRMSGVLILQEILQSNGILNEVSSPVGTTRCSICAAIRDDHTHSDHQFIPVRFTILHSEIEPAVRERSLALFNASSNLEGHQLRILIGSKVIVEGLNFQAVRYEMIMSLPLDIPRLIQVFGRVVRKNSHMELPPNERNVTIYLYVSTTPDGGPELAKYAQKLKEYILIQEGDKALRKHAIDGFTNQIKIDKPMLESLPLSPSITPANVGATVLNTFEAYGYGEQEVKTISNIIISLFMARPVWTYSELWKAVSTPKLIQGITIDNKLFSEDNFALALISLCYSKNQCKELLIQNRLCTIMHVPAKPEHLYIAAVLNHKKEPVLDIETYIRDFQPPTMHSVRITKYLEHSQTKEPFQVLYEKFQKDFQDEPIEQVLIHYPASFHYTMLEALIIDNLAGMGALVEVYKKFFIAFSKKDIQPFPDIFKIISHVPGDDNTLVGYATEDSVRLITSRKDKTWHEIPLYMLNINVKRKENDIVIGYMESKGKALKFKIRPPIQVLKKNEITDIRMLNRGAVCETRGREEQQKIANQLGISLNLTKISAIKLCLLIRNNLLQKEMEARNQPNGMQDGIRWFYLFNDKMPSLVHTS.

Residues 17 to 317 (KGGRAFFPCD…PNGQPLQRQQ (301 aa)) enclose the Helicase ATP-binding domain. An ATP-binding site is contributed by 64–71 (WQTGTGKS). The short motif at 246-249 (DEIH) is the DEAH box element. One can recognise a Helicase C-terminal domain in the interval 489–689 (MMKDILSIIR…EGDKALRKHA (201 aa)).

The protein belongs to the DEAD box helicase family. DEAH subfamily.

It is found in the virion. The catalysed reaction is ATP + H2O = ADP + phosphate + H(+). Putative initation factor. In African swine fever virus (isolate Tick/Malawi/Lil 20-1/1983) (ASFV), this protein is Early transcription factor large subunit homolog.